A 166-amino-acid chain; its full sequence is Large ribosomal subunit protein uL10 (166 aa).

Belongs to the universal ribosomal protein uL10 family. Part of the ribosomal stalk of the 50S ribosomal subunit. The N-terminus interacts with L11 and the large rRNA to form the base of the stalk. The C-terminus forms an elongated spine to which L12 dimers bind in a sequential fashion forming a multimeric L10(L12)X complex.

Forms part of the ribosomal stalk, playing a central role in the interaction of the ribosome with GTP-bound translation factors. This chain is Large ribosomal subunit protein uL10, found in Pseudomonas entomophila (strain L48).